We begin with the raw amino-acid sequence, 473 residues long: Cholesterol 22-monohydroxylase CYP90B52 (473 aa).

The chain crosses the membrane as a helical span at residues 2–22 (EGLLLLLPTAIIALYLYISLI). C422 contacts heme.

This sequence belongs to the cytochrome P450 family. Mainly expressed in leaves and roots and, at low levels, in fruits and stems.

Its subcellular location is the membrane. It carries out the reaction cholesterol + reduced [NADPH--hemoprotein reductase] + O2 = (22S)-22-hydroxycholesterol + oxidized [NADPH--hemoprotein reductase] + H2O + H(+). Its pathway is steroid metabolism; cholesterol metabolism. Its function is as follows. Canonical brassinosteroid (BR)-biosynthetic enzyme capable of converting cholesterol to 22S-hydroxycholesterol via sterol-C22 hydroxylation. The protein is Cholesterol 22-monohydroxylase CYP90B52 of Paris polyphylla (Daiswa polyphylla).